A 233-amino-acid chain; its full sequence is DNA-directed RNA polymerase V subunit 5C (233 aa).

Belongs to the archaeal Rpo5/eukaryotic RPB5 RNA polymerase subunit family. As to quaternary structure, component of the RNA polymerase V complex. In terms of tissue distribution, expressed in flower buds and siliques.

It is found in the nucleus. Functionally, DNA-dependent RNA polymerase catalyzes the transcription of DNA into RNA using the four ribonucleoside triphosphates as substrates. Component of RNA polymerase V involved in RNA-directed DNA methylation-dependent (RdDM) silencing of endogenous repeated sequences, including transposable elements. This is DNA-directed RNA polymerase V subunit 5C (NRPE5C) from Arabidopsis thaliana (Mouse-ear cress).